Consider the following 488-residue polypeptide: Glutamyl-tRNA(Gln) amidotransferase subunit A (488 aa).

Catalysis depends on charge relay system residues K77 and S152. The active-site Acyl-ester intermediate is the S176.

This sequence belongs to the amidase family. GatA subfamily. As to quaternary structure, heterotrimer of A, B and C subunits.

The enzyme catalyses L-glutamyl-tRNA(Gln) + L-glutamine + ATP + H2O = L-glutaminyl-tRNA(Gln) + L-glutamate + ADP + phosphate + H(+). Allows the formation of correctly charged Gln-tRNA(Gln) through the transamidation of misacylated Glu-tRNA(Gln) in organisms which lack glutaminyl-tRNA synthetase. The reaction takes place in the presence of glutamine and ATP through an activated gamma-phospho-Glu-tRNA(Gln). In Streptococcus agalactiae serotype III (strain NEM316), this protein is Glutamyl-tRNA(Gln) amidotransferase subunit A.